We begin with the raw amino-acid sequence, 28 residues long: Gamma-conotoxin-like de7a (28 aa).

3 disulfides stabilise this stretch: Cys2-Cys18, Cys9-Cys22, and Cys17-Cys27. Residue Pro4 is modified to 4-hydroxyproline. 4-carboxyglutamate occurs at positions 13 and 16. Ser28 is subject to Serine amide.

This sequence belongs to the conotoxin O1 superfamily. Expressed by the venom duct.

The protein localises to the secreted. Functionally, gamma-conotoxins may act on voltage-gated non-specific cation pacemaker channels (HCN). In Conasprella delessertii (Sozon's cone), this protein is Gamma-conotoxin-like de7a.